A 269-amino-acid polypeptide reads, in one-letter code: 5'-nucleotidase SurE (269 aa).

Residues Asp-11, Asp-12, Ser-43, and Asn-101 each contribute to the a divalent metal cation site.

This sequence belongs to the SurE nucleotidase family. It depends on a divalent metal cation as a cofactor.

Its subcellular location is the cytoplasm. The enzyme catalyses a ribonucleoside 5'-phosphate + H2O = a ribonucleoside + phosphate. Functionally, nucleotidase that shows phosphatase activity on nucleoside 5'-monophosphates. The protein is 5'-nucleotidase SurE of Prochlorococcus marinus (strain MIT 9313).